The chain runs to 917 residues: Outer membrane protein SlpA (917 aa).

The N-terminal stretch at 1 to 23 is a signal peptide; sequence MKKRLVTLLAGLLTVLSMGFGLA. In terms of domain architecture, SLH spans 24–84; the sequence is QFSDVPAGHW…QQIEEELKTQ (61 aa).

Homotrimer.

It is found in the cell outer membrane. Functionally, plays an important role in the structural organization and integrity of the cell envelope, bridging the outer membrane to the peptidoglyan layer. Appears to be a nonselective channel. In Thermus thermophilus (strain ATCC 27634 / DSM 579 / HB8), this protein is Outer membrane protein SlpA (slpA).